The primary structure comprises 284 residues: Proton-translocating ferredoxin:NAD(+) oxidoreductase complex subunit B (284 aa).

A hydrophobic region spans residues 1-26; that stretch reads MNTVIMILVVMTIIGLIFGLVLAYVN. The 61-residue stretch at 32–92 folds into the 4Fe-4S domain; sequence EVNPLVDLVE…AEQVAKLTGK (61 aa). [4Fe-4S] cluster contacts are provided by cysteine 49, cysteine 52, cysteine 57, cysteine 75, cysteine 138, cysteine 142, cysteine 148, cysteine 152, cysteine 172, cysteine 175, cysteine 178, cysteine 182, cysteine 217, cysteine 220, cysteine 223, cysteine 227, cysteine 246, cysteine 249, cysteine 254, and cysteine 258. 4Fe-4S ferredoxin-type domains follow at residues 133–162, 163–192, 206–237, and 239–269; these read GGPK…MGSN, GLPI…FRPV, GGAV…VENN, and AVVD…IVSG.

This sequence belongs to the 4Fe4S bacterial-type ferredoxin family. RnfB subfamily. As to quaternary structure, the complex is composed of six subunits: RnfA, RnfB, RnfC, RnfD, RnfE and RnfG. [4Fe-4S] cluster serves as cofactor.

The protein localises to the cell membrane. In terms of biological role, part of a membrane-bound complex that couples electron transfer with translocation of ions across the membrane. Couples electron transfer from reduced ferredoxin to NAD(+) with translocation of H(+) out of the cell. Essential for energy conservation during autotrophic growth. Contributes to ATP synthesis during heterotrophic growth. In Clostridium ljungdahlii (strain ATCC 55383 / DSM 13528 / PETC), this protein is Proton-translocating ferredoxin:NAD(+) oxidoreductase complex subunit B.